The primary structure comprises 517 residues: Putative transporter C543.05c (517 aa).

Helical transmembrane passes span Ser68–Leu88, Leu93–Met113, Phe121–Ala141, Cys155–Cys175, Phe186–Gly206, Ile217–Ile237, Ile269–Tyr289, Gly311–Ile331, Ser377–Leu397, Cys403–Thr423, and Arg449–Val471.

Belongs to the anion exchanger (TC 2.A.31) family.

It is found in the vacuole membrane. This chain is Putative transporter C543.05c, found in Schizosaccharomyces pombe (strain 972 / ATCC 24843) (Fission yeast).